A 154-amino-acid polypeptide reads, in one-letter code: SsrA-binding protein (154 aa).

The segment at 131 to 154 (DKRQDLKQKEAKRDIERAFKERQQ) is disordered. Residues 132–154 (KRQDLKQKEAKRDIERAFKERQQ) are compositionally biased toward basic and acidic residues.

The protein belongs to the SmpB family.

Its subcellular location is the cytoplasm. In terms of biological role, required for rescue of stalled ribosomes mediated by trans-translation. Binds to transfer-messenger RNA (tmRNA), required for stable association of tmRNA with ribosomes. tmRNA and SmpB together mimic tRNA shape, replacing the anticodon stem-loop with SmpB. tmRNA is encoded by the ssrA gene; the 2 termini fold to resemble tRNA(Ala) and it encodes a 'tag peptide', a short internal open reading frame. During trans-translation Ala-aminoacylated tmRNA acts like a tRNA, entering the A-site of stalled ribosomes, displacing the stalled mRNA. The ribosome then switches to translate the ORF on the tmRNA; the nascent peptide is terminated with the 'tag peptide' encoded by the tmRNA and targeted for degradation. The ribosome is freed to recommence translation, which seems to be the essential function of trans-translation. The sequence is that of SsrA-binding protein from Listeria innocua serovar 6a (strain ATCC BAA-680 / CLIP 11262).